The primary structure comprises 811 residues: tRNA(Met) cytidine acetyltransferase TmcA (811 aa).

ATP-binding residues include Gln-267 and Arg-440. The N-acetyltransferase domain occupies 474 to 663 (RKEVYLEEPD…GEFTAIVLKP (190 aa)). Acetyl-CoA is bound by residues 590–592 (IAT), Glu-630, and Arg-637.

It belongs to the TmcA family.

It is found in the cytoplasm. The enzyme catalyses cytidine(34) in elongator tRNA(Met) + acetyl-CoA + ATP + H2O = N(4)-acetylcytidine(34) in elongator tRNA(Met) + ADP + phosphate + CoA + H(+). It catalyses the reaction a cytidine in RNA + acetyl-CoA + ATP + H2O = an N(4)-acetylcytidine in RNA + ADP + phosphate + CoA + H(+). It carries out the reaction a cytidine in tRNA + acetyl-CoA + ATP + H2O = an N(4)-acetylcytidine in tRNA + ADP + phosphate + CoA + H(+). The catalysed reaction is a cytidine in mRNA + acetyl-CoA + ATP + H2O = an N(4)-acetylcytidine in mRNA + ADP + phosphate + CoA + H(+). Its function is as follows. Catalyzes the formation of N(4)-acetylcytidine (ac(4)C) at the wobble position of tRNA(Met), by using acetyl-CoA as an acetyl donor and ATP (or GTP). Catalyzes the formation of 404 N(4)-acetylcytidine (ac(4)C) sites in RNA, almost always on the middle C of a CCG motif. There 173 ac(4)C sites in rRNA, 35 in non-coding (nc)RNA, 119 in mRNA and 77 in tRNA. More acetylation is observed at 85 and 95 than at 65 or 75 degrees Celsius. The sequence is that of tRNA(Met) cytidine acetyltransferase TmcA from Thermococcus kodakarensis (strain ATCC BAA-918 / JCM 12380 / KOD1) (Pyrococcus kodakaraensis (strain KOD1)).